Consider the following 280-residue polypeptide: MIHPLLQQPSYRIIDQSSLGTMFQAEQSFATDDTLCASTQERGAVLRAWVHTDTIVLGIQDARLPHLKEGIRYLHEQGFRPVVRNSGGLAVVLDDDVLNLSLILPEKDGIQIDSGYEAMTSLIQHMFQDVTNDIVPGEVVGSYCPGSFDLSIDGKKFAGISQRRVRGGVAVQIYLSVRQSGSARAEIIRDFYDLAIQGEETKFTYPTIVPETMASLEDLLGIPLTVQDVLTRAYRVLSTVSLLQNATLTADEQTMFASQLERMWKRNEPLRDIEQQLTEE.

Residues 40–245 (QERGAVLRAW…VLSTVSLLQN (206 aa)) form the BPL/LPL catalytic domain. Cysteine 144 (acyl-thioester intermediate) is an active-site residue.

This sequence belongs to the octanoyltransferase LipL family.

The enzyme catalyses N(6)-octanoyl-L-lysyl-[glycine-cleavage complex H protein] + L-lysyl-[lipoyl-carrier protein] = N(6)-octanoyl-L-lysyl-[lipoyl-carrier protein] + L-lysyl-[glycine-cleavage complex H protein]. Its pathway is protein modification; protein lipoylation via endogenous pathway; protein N(6)-(lipoyl)lysine from octanoyl-[acyl-carrier-protein]. Functionally, catalyzes the amidotransfer (transamidation) of the octanoyl moiety from octanoyl-GcvH to the lipoyl domain of the E2 subunit of lipoate-dependent enzymes. The sequence is that of Octanoyl-[GcvH]:protein N-octanoyltransferase from Exiguobacterium sp. (strain ATCC BAA-1283 / AT1b).